The chain runs to 234 residues: Peptidase E (234 aa).

Residues serine 123, aspartate 138, and histidine 160 each act as charge relay system in the active site.

Belongs to the peptidase S51 family.

Its subcellular location is the cytoplasm. It catalyses the reaction Dipeptidase E catalyzes the hydrolysis of dipeptides Asp-|-Xaa. It does not act on peptides with N-terminal Glu, Asn or Gln, nor does it cleave isoaspartyl peptides.. Hydrolyzes dipeptides containing N-terminal aspartate residues. May play a role in allowing the cell to use peptide aspartate to spare carbon otherwise required for the synthesis of the aspartate family of amino acids. The protein is Peptidase E of Pasteurella multocida (strain Pm70).